Consider the following 143-residue polypeptide: Large ribosomal subunit protein uL11 (143 aa).

It belongs to the universal ribosomal protein uL11 family. Part of the ribosomal stalk of the 50S ribosomal subunit. Interacts with L10 and the large rRNA to form the base of the stalk. L10 forms an elongated spine to which L12 dimers bind in a sequential fashion forming a multimeric L10(L12)X complex. In terms of processing, one or more lysine residues are methylated.

In terms of biological role, forms part of the ribosomal stalk which helps the ribosome interact with GTP-bound translation factors. The chain is Large ribosomal subunit protein uL11 from Caulobacter vibrioides (strain ATCC 19089 / CIP 103742 / CB 15) (Caulobacter crescentus).